The chain runs to 1406 residues: DNA-directed RNA polymerase subunit beta' (1406 aa).

Zn(2+)-binding residues include Cys-72, Cys-74, Cys-87, and Cys-90. Residues Asp-462, Asp-464, and Asp-466 each contribute to the Mg(2+) site. Cys-816, Cys-889, Cys-896, and Cys-899 together coordinate Zn(2+).

This sequence belongs to the RNA polymerase beta' chain family. In terms of assembly, the RNAP catalytic core consists of 2 alpha, 1 beta, 1 beta' and 1 omega subunit. When a sigma factor is associated with the core the holoenzyme is formed, which can initiate transcription. Mg(2+) serves as cofactor. It depends on Zn(2+) as a cofactor.

The catalysed reaction is RNA(n) + a ribonucleoside 5'-triphosphate = RNA(n+1) + diphosphate. Functionally, DNA-dependent RNA polymerase catalyzes the transcription of DNA into RNA using the four ribonucleoside triphosphates as substrates. The protein is DNA-directed RNA polymerase subunit beta' of Psychrobacter sp. (strain PRwf-1).